Consider the following 362-residue polypeptide: MSGKRVVVGMSGGVDSSVTAWLLKQQGYEVIGLFMKNWEDDDDSEYCSTRQDWLDVVSVADLIGVDVEAVNFAAEYKDRVFADFLREYSAGRTPNPDVLCNAEIKFKAFLDHAMSLGAETIATGHYARVRQNAAGRFELLKALDHTKDQSYFLHRLNQAQLSRTLFPLGEIPKTRVREIAAEIGLPNAKKKDSTGICFIGERPFRDFLNRYLPTKPGPMKTPDGKVVGEHIGLAFYTLGQRKGIGLGGSREGSGDAWYVARKDMASNTLYVVQGHDHPWLLTPTLVAADLSWVAGEPPLAGASMAAKTRYRQSDAPCVVDAADGDMLKLAFAEAQWAVTPGQSAVLYDGDVCLGGGIIQSAQ.

ATP contacts are provided by residues 9–16 (GMSGGVDS) and M35. The interval 95–97 (NPD) is interaction with target base in tRNA. The active-site Nucleophile is the C100. C100 and C197 are disulfide-bonded. Residue G124 coordinates ATP. Residues 147 to 149 (KDQ) are interaction with tRNA. Catalysis depends on C197, which acts as the Cysteine persulfide intermediate. The tract at residues 309-310 (RY) is interaction with tRNA.

Belongs to the MnmA/TRMU family.

The protein localises to the cytoplasm. The enzyme catalyses S-sulfanyl-L-cysteinyl-[protein] + uridine(34) in tRNA + AH2 + ATP = 2-thiouridine(34) in tRNA + L-cysteinyl-[protein] + A + AMP + diphosphate + H(+). Functionally, catalyzes the 2-thiolation of uridine at the wobble position (U34) of tRNA, leading to the formation of s(2)U34. The protein is tRNA-specific 2-thiouridylase MnmA of Cupriavidus pinatubonensis (strain JMP 134 / LMG 1197) (Cupriavidus necator (strain JMP 134)).